The following is a 340-amino-acid chain: Probable glucan endo-1,3-beta-glucosidase BG1 (340 aa).

The N-terminal stretch at 1 to 25 (MDLRFLASLTLLLGLFFVNTNPTGG) is a signal peptide. Catalysis depends on Glu120, which acts as the Proton donor. The Nucleophile role is filled by Glu262.

The protein belongs to the glycosyl hydrolase 17 family.

Its subcellular location is the secreted. It carries out the reaction Hydrolysis of (1-&gt;3)-beta-D-glucosidic linkages in (1-&gt;3)-beta-D-glucans.. Its function is as follows. May play a role in plant defense against pathogens. This chain is Probable glucan endo-1,3-beta-glucosidase BG1, found in Arabidopsis thaliana (Mouse-ear cress).